We begin with the raw amino-acid sequence, 97 residues long: Large ribosomal subunit protein uL23 (97 aa).

It belongs to the universal ribosomal protein uL23 family. In terms of assembly, part of the 50S ribosomal subunit. Contacts protein L29, and trigger factor when it is bound to the ribosome.

Functionally, one of the early assembly proteins it binds 23S rRNA. One of the proteins that surrounds the polypeptide exit tunnel on the outside of the ribosome. Forms the main docking site for trigger factor binding to the ribosome. In Brucella anthropi (strain ATCC 49188 / DSM 6882 / CCUG 24695 / JCM 21032 / LMG 3331 / NBRC 15819 / NCTC 12168 / Alc 37) (Ochrobactrum anthropi), this protein is Large ribosomal subunit protein uL23.